The following is a 258-amino-acid chain: UPF0246 protein Asuc_0575 (258 aa).

The protein belongs to the UPF0246 family.

The chain is UPF0246 protein Asuc_0575 from Actinobacillus succinogenes (strain ATCC 55618 / DSM 22257 / CCUG 43843 / 130Z).